A 745-amino-acid polypeptide reads, in one-letter code: Translation initiation factor IF-2 (745 aa).

The interval 1-154 (MSDKPRRDTG…PAARPVVRPR (154 aa)) is disordered. Residues 36-56 (TGRSPNASTGGNRSAGNQAGN) are compositionally biased toward polar residues. Residues 68-98 (ATTPAPNRNTPPAGARQGGAANARTGTPPVA) are compositionally biased toward low complexity. Gly residues predominate over residues 99 to 113 (RGGGGGVTPPTGRGG). Over residues 114–126 (NNPRAARNQPRSR) the composition is skewed to low complexity. Positions 127–138 (QQPEEREREHVL) are enriched in basic and acidic residues. A tr-type G domain is found at 241-410 (PRPPVVTIMG…LLVADLEDLR (170 aa)). The tract at residues 250–257 (GHVDHGKT) is G1. 250 to 257 (GHVDHGKT) serves as a coordination point for GTP. The interval 275–279 (GITQH) is G2. Residues 296 to 299 (DTPG) form a G3 region. Residues 296–300 (DTPGH) and 350–353 (NKID) contribute to the GTP site. The G4 stretch occupies residues 350-353 (NKID). A G5 region spans residues 386-388 (SAR).

Belongs to the TRAFAC class translation factor GTPase superfamily. Classic translation factor GTPase family. IF-2 subfamily.

Its subcellular location is the cytoplasm. Its function is as follows. One of the essential components for the initiation of protein synthesis. Protects formylmethionyl-tRNA from spontaneous hydrolysis and promotes its binding to the 30S ribosomal subunits. Also involved in the hydrolysis of GTP during the formation of the 70S ribosomal complex. The polypeptide is Translation initiation factor IF-2 (Chloroflexus aurantiacus (strain ATCC 29366 / DSM 635 / J-10-fl)).